We begin with the raw amino-acid sequence, 405 residues long: Arginine deiminase (405 aa).

The active-site Amidino-cysteine intermediate is the C395.

The protein belongs to the arginine deiminase family.

It is found in the cytoplasm. It carries out the reaction L-arginine + H2O = L-citrulline + NH4(+). Its pathway is amino-acid degradation; L-arginine degradation via ADI pathway; carbamoyl phosphate from L-arginine: step 1/2. In Rhodococcus opacus (strain B4), this protein is Arginine deiminase.